A 285-amino-acid chain; its full sequence is Tumor necrosis factor ligand superfamily member 13B (285 aa).

At 1-46 the chain is on the cytoplasmic side; sequence MDDSTEREQSRLTSCLKKREEMKLKECVSILPRKESPSVRSSKDGK. The helical; Signal-anchor for type II membrane protein transmembrane segment at 47 to 67 threads the bilayer; the sequence is LLAATLLLALLSCCLTVVSFY. Over 68–285 the chain is Extracellular; sequence QVAALQGDLA…VTFFGALKLL (218 aa). Residues 114 to 138 are disordered; the sequence is IFEPPAPGEGNSSQNSRNKRAVQGP. Asparagine 124 is a glycosylation site (N-linked (GlcNAc...) asparagine). In terms of domain architecture, THD spans 145 to 284; it reads DCLQLIADSE…DVTFFGALKL (140 aa). An intrachain disulfide couples cysteine 232 to cysteine 245. Asparagine 242 carries N-linked (GlcNAc...) (high mannose) asparagine glycosylation.

It belongs to the tumor necrosis factor family. Homotrimer. Isoform 2 heteromultimerizes with isoform 1, probably limiting the amount of functional isoform 1 on the cell surface. Isoform 3 is unlikely form trimers or bind to BAFF receptors. Post-translationally, the soluble form derives from the membrane form by proteolytic processing. Isoform 2 is not efficiently shed from the membrane unlike isoform 1. In terms of processing, N-glycosylated. Abundantly expressed in peripheral blood Leukocytes and is specifically expressed in monocytes and macrophages. Also found in the spleen, lymph node, bone marrow, T-cells and dendritic cells. A lower expression seen in placenta, heart, lung, fetal liver, thymus, and pancreas. Isoform 2 is expressed in many myeloid cell lines.

It localises to the cell membrane. It is found in the secreted. Cytokine that binds to TNFRSF13B/TACI and TNFRSF17/BCMA. TNFSF13/APRIL binds to the same 2 receptors. Together, they form a 2 ligands -2 receptors pathway involved in the stimulation of B- and T-cell function and the regulation of humoral immunity. A third B-cell specific BAFF-receptor (BAFFR/BR3) promotes the survival of mature B-cells and the B-cell response. Functionally, isoform 2 seems to inhibit isoform 1 secretion and bioactivity. In terms of biological role, acts as a transcription factor for its own parent gene, in association with NF-kappa-B p50 subunit, at least in autoimmune and proliferative B-cell diseases. The presence of Delta4BAFF is essential for soluble BAFF release by IFNG/IFN-gamma-stimulated monocytes and for B-cell survival. It can directly or indirectly regulate the differential expression of a large number of genes involved in the innate immune response and the regulation of apoptosis. This chain is Tumor necrosis factor ligand superfamily member 13B (TNFSF13B), found in Homo sapiens (Human).